The following is a 177-amino-acid chain: Small ribosomal subunit protein uS13 (177 aa).

Basic residues predominate over residues 132-145; that stretch reads GVRHKRGQKVRGQR. The segment at 132-177 is disordered; sequence GVRHKRGQKVRGQRTKSTGRTEGTIGVNVEAIKEEQAEDAAAEDDE. The segment covering 167–177 has biased composition (acidic residues); sequence QAEDAAAEDDE.

Belongs to the universal ribosomal protein uS13 family. As to quaternary structure, part of the 30S ribosomal subunit. Forms a loose heterodimer with protein S19. Forms two bridges to the 50S subunit in the 70S ribosome.

Its function is as follows. Located at the top of the head of the 30S subunit, it contacts several helices of the 16S rRNA. In the 70S ribosome it contacts the 23S rRNA (bridge B1a) and protein L5 of the 50S subunit (bridge B1b), connecting the 2 subunits; these bridges are implicated in subunit movement. This is Small ribosomal subunit protein uS13 from Haloarcula marismortui (strain ATCC 43049 / DSM 3752 / JCM 8966 / VKM B-1809) (Halobacterium marismortui).